The sequence spans 368 residues: Anaphase-promoting complex subunit MND2 (368 aa).

Disordered stretches follow at residues 140-167 (AQNAEGNNEEDFRQHDSREEDPRNNGSI) and 286-336 (RNPY…GITP). The segment covering 149 to 162 (EDFRQHDSREEDPR) has biased composition (basic and acidic residues). A Phosphoserine modification is found at Ser-293.

Belongs to the APC15 family. As to quaternary structure, the APC/C is composed of at least 13 subunits that stay tightly associated throughout the cell cycle: APC1, APC2, APC4, APC5, APC9, APC11, CDC16, CDC23, CDC26, CDC27, DOC1, MND2 and SWM1. MND2 interacts directly with APC1, APC5 and CDC23.

Its pathway is protein modification; protein ubiquitination. In terms of biological role, component of the anaphase promoting complex/cyclosome (APC/C), a cell cycle-regulated E3 ubiquitin-protein ligase complex that controls progression through mitosis and the G1 phase of the cell cycle. The APC/C is thought to confer substrate specificity and, in the presence of ubiquitin-conjugating E2 enzymes, it catalyzes the formation of protein-ubiquitin conjugates that are subsequently degraded by the 26S proteasome. In early mitosis, the APC/C is activated by CDC20 and targets securin PDS1, the B-type cyclin CLB5, and other anaphase inhibitory proteins for proteolysis, thereby triggering the separation of sister chromatids at the metaphase-to-anaphase transition. In late mitosis and in G1, degradation of CLB5 allows activation of the APC/C by CDH1, which is needed to destroy CDC20 and the B-type cyclin CLB2 to allow exit from mitosis and creating the low CDK state necessary for cytokinesis and for reforming prereplicative complexes in G1 prior to another round of replication. In Saccharomyces cerevisiae (strain ATCC 204508 / S288c) (Baker's yeast), this protein is Anaphase-promoting complex subunit MND2 (MND2).